The sequence spans 119 residues: Phosphoribosyl-AMP cyclohydrolase (119 aa).

A Mg(2+)-binding site is contributed by Asp77. Cys78 contacts Zn(2+). Residues Asp79 and Asp81 each contribute to the Mg(2+) site. Cys94 and Cys101 together coordinate Zn(2+).

This sequence belongs to the PRA-CH family. In terms of assembly, homodimer. Mg(2+) serves as cofactor. It depends on Zn(2+) as a cofactor.

Its subcellular location is the cytoplasm. The enzyme catalyses 1-(5-phospho-beta-D-ribosyl)-5'-AMP + H2O = 1-(5-phospho-beta-D-ribosyl)-5-[(5-phospho-beta-D-ribosylamino)methylideneamino]imidazole-4-carboxamide. It functions in the pathway amino-acid biosynthesis; L-histidine biosynthesis; L-histidine from 5-phospho-alpha-D-ribose 1-diphosphate: step 3/9. Its function is as follows. Catalyzes the hydrolysis of the adenine ring of phosphoribosyl-AMP. The sequence is that of Phosphoribosyl-AMP cyclohydrolase from Cereibacter sphaeroides (strain ATCC 17023 / DSM 158 / JCM 6121 / CCUG 31486 / LMG 2827 / NBRC 12203 / NCIMB 8253 / ATH 2.4.1.) (Rhodobacter sphaeroides).